Consider the following 486-residue polypeptide: Vanillin dehydrogenase (486 aa).

Residues Gly210–Pro211, Gly230–Ser231, and Glu252–Gly254 each bind NAD(+). Residue Glu252 is the Proton acceptor of the active site. The active-site Nucleophile is the Cys286. An NAD(+)-binding site is contributed by Glu380–Phe382.

It belongs to the aldehyde dehydrogenase family.

It catalyses the reaction vanillin + NAD(+) + H2O = vanillate + NADH + 2 H(+). Its function is as follows. Catalyzes NAD(+)-dependent oxidation of vanillin to vanillate. Also oxidizes other aromatic aldehydes including benzaldehyde, coniferyl aldehyde and cinnamaldehyde, but has a preference for vanillin. Not active with NADP(+). Involved in the degradation pathway of lignin-derived aromatic compounds of plant cell walls. Catalyzes the conversion of vanillin to vanillate due to toxicity of vanillin to the cells. The sequence is that of Vanillin dehydrogenase from Amycolatopsis sp. (strain ATCC 39116 / 75iv2).